A 449-amino-acid chain; its full sequence is UDP-N-acetylmuramoylalanine--D-glutamate ligase (449 aa).

113-119 (GTNGKTT) provides a ligand contact to ATP.

The protein belongs to the MurCDEF family.

It localises to the cytoplasm. The enzyme catalyses UDP-N-acetyl-alpha-D-muramoyl-L-alanine + D-glutamate + ATP = UDP-N-acetyl-alpha-D-muramoyl-L-alanyl-D-glutamate + ADP + phosphate + H(+). Its pathway is cell wall biogenesis; peptidoglycan biosynthesis. Its function is as follows. Cell wall formation. Catalyzes the addition of glutamate to the nucleotide precursor UDP-N-acetylmuramoyl-L-alanine (UMA). The polypeptide is UDP-N-acetylmuramoylalanine--D-glutamate ligase (Gloeothece citriformis (strain PCC 7424) (Cyanothece sp. (strain PCC 7424))).